The primary structure comprises 274 residues: 2,3,4,5-tetrahydropyridine-2,6-dicarboxylate N-succinyltransferase (274 aa).

Residues Arg104 and Asp141 each contribute to the substrate site.

The protein belongs to the transferase hexapeptide repeat family. As to quaternary structure, homotrimer.

It localises to the cytoplasm. It catalyses the reaction (S)-2,3,4,5-tetrahydrodipicolinate + succinyl-CoA + H2O = (S)-2-succinylamino-6-oxoheptanedioate + CoA. It participates in amino-acid biosynthesis; L-lysine biosynthesis via DAP pathway; LL-2,6-diaminopimelate from (S)-tetrahydrodipicolinate (succinylase route): step 1/3. This Shewanella pealeana (strain ATCC 700345 / ANG-SQ1) protein is 2,3,4,5-tetrahydropyridine-2,6-dicarboxylate N-succinyltransferase.